The primary structure comprises 83 residues: U5-theraphotoxin-Hs1c (83 aa).

The N-terminal stretch at 1-21 is a signal peptide; it reads MKTSMFLTLTGLVLLFVVCYA. A propeptide spanning residues 22 to 49 is cleaved from the precursor; it reads SESEEKEFPKELLSSIFAADSDFKVEER. Cystine bridges form between cysteine 51–cysteine 63, cysteine 56–cysteine 68, and cysteine 62–cysteine 75.

Belongs to the neurotoxin 10 (Hwtx-1) family. 51 (Hntx-8) subfamily. Hntx-8 sub-subfamily. Expressed by the venom gland.

It localises to the secreted. Its function is as follows. Agglutinates erythrocytes. In Cyriopagopus schmidti (Chinese bird spider), this protein is U5-theraphotoxin-Hs1c.